The following is a 463-amino-acid chain: Retinoic acid receptor RXR-gamma (463 aa).

Residues 1-138 are modulating; it reads MYGNYSHFMK…TSPGSLVKHI (138 aa). The tract at residues 16-53 is disordered; sequence GGSPGHTGSTSMSPSVALPTGKPMDSHPSYTDTPVSAP. NR C4-type zinc fingers lie at residues 139–159 and 175–199; these read CAIC…CEGC and CRDN…YQKC. Positions 139–204 form a DNA-binding region, nuclear receptor; sequence CAICGDRSSG…RYQKCLVMGM (66 aa). A hinge region spans residues 205 to 230; it reads KREAVQEERQRSRERAESEAECASTG. One can recognise an NR LBD domain in the interval 231–459; it reads HEDMPVERIL…TFLMEMLETP (229 aa).

Belongs to the nuclear hormone receptor family. NR2 subfamily. Homodimer. Heterodimer with a RAR molecule. Binds DNA preferentially as a RAR/RXR heterodimer. Interacts with RARA. Post-translationally, acetylated by EP300. As to expression, expressed in the liver, but not detected in the adrenal gland (at protein level). Restricted expression in adrenal gland, kidney, liver, brain and lungs. Strong expression in heart and muscles.

Its subcellular location is the nucleus. The protein resides in the cytoplasm. In terms of biological role, receptor for retinoic acid. Retinoic acid receptors bind as heterodimers to their target response elements in response to their ligands, all-trans or 9-cis retinoic acid, and regulate gene expression in various biological processes. The RAR/RXR heterodimers bind to the retinoic acid response elements (RARE) composed of tandem 5'-AGGTCA-3' sites known as DR1-DR5. The high affinity ligand for RXRs is 9-cis retinoic acid. This chain is Retinoic acid receptor RXR-gamma (Rxrg), found in Rattus norvegicus (Rat).